A 222-amino-acid chain; its full sequence is Ras-related protein RABA4d (222 aa).

22 to 29 (GDSAVGKT) serves as a coordination point for GTP. Positions 44–52 (SKATIGVEF) match the Effector region motif. Residues 70–74 (DTAGQ), 128–131 (NKCD), and 158–159 (SA) each bind GTP. S-geranylgeranyl cysteine attachment occurs at residues C218 and C219.

This sequence belongs to the small GTPase superfamily. Rab family. In terms of assembly, interacts with PI4KB1. As to expression, specifically expressed in pollen and localized to the tips of growing pollen tubes.

It localises to the cytoplasmic vesicle membrane. Its function is as follows. Intracellular vesicle trafficking and protein transport. Plays an important role in the regulation of pollen tube tip growth. The chain is Ras-related protein RABA4d (RABA4D) from Arabidopsis thaliana (Mouse-ear cress).